Consider the following 156-residue polypeptide: Small ribosomal subunit protein uS7 (156 aa).

The protein belongs to the universal ribosomal protein uS7 family. As to quaternary structure, part of the 30S ribosomal subunit. Contacts proteins S9 and S11.

One of the primary rRNA binding proteins, it binds directly to 16S rRNA where it nucleates assembly of the head domain of the 30S subunit. Is located at the subunit interface close to the decoding center, probably blocks exit of the E-site tRNA. This chain is Small ribosomal subunit protein uS7, found in Jannaschia sp. (strain CCS1).